A 293-amino-acid chain; its full sequence is HTH-type transcriptional regulator ArgP (293 aa).

Residues 4–60 enclose the HTH lysR-type domain; the sequence is PDYRTLQALDAVIRERGFERAAQKLCITQSAVSQRIKQLENLFGQPLLVRTIPPHPT. The segment at residues 21–40 is a DNA-binding region (H-T-H motif); sequence FERAAQKLCITQSAVSQRIK.

This sequence belongs to the LysR transcriptional regulatory family. As to quaternary structure, homodimer.

Controls the transcription of genes involved in arginine and lysine metabolism. This Sodalis glossinidius (strain morsitans) protein is HTH-type transcriptional regulator ArgP.